Consider the following 208-residue polypeptide: Large ribosomal subunit protein uL4 (208 aa).

The disordered stretch occupies residues 58–77 (RGGGRKPWRQKGTGRARQGS). Residues 60–71 (GGRKPWRQKGTG) are compositionally biased toward basic residues.

The protein belongs to the universal ribosomal protein uL4 family. In terms of assembly, part of the 50S ribosomal subunit.

In terms of biological role, one of the primary rRNA binding proteins, this protein initially binds near the 5'-end of the 23S rRNA. It is important during the early stages of 50S assembly. It makes multiple contacts with different domains of the 23S rRNA in the assembled 50S subunit and ribosome. Functionally, forms part of the polypeptide exit tunnel. This is Large ribosomal subunit protein uL4 from Caldicellulosiruptor saccharolyticus (strain ATCC 43494 / DSM 8903 / Tp8T 6331).